A 396-amino-acid chain; its full sequence is Protein TOC75-4, chloroplastic (396 aa).

At 1–23 (MEAVKEAVRKIKSLVIPHADEKD) the chain is on the chloroplast intermembrane side. Residues 24 to 32 (NGIVFEIKL) traverse the membrane as a beta stranded segment. Residues 33–87 (NETDQRVEKWGLDPSLDFFEVTGNCNLGRPNSEGSNQSLMGSVTIRNIFNPKLDD) lie on the Cytoplasmic side of the membrane. Residues 88 to 96 (LLSKIEYVR) form a beta stranded membrane-spanning segment. Topologically, residues 97 to 140 (FLEAVKKPRNRTFKTSFFNSRKLSPVFTGGPGYEDLVPPMFVGR) are chloroplast intermembrane. Residues 141–148 (DCLKATIT) traverse the membrane as a beta stranded segment. At 149 to 156 (ENLTRQRE) the chain is on the cytoplasmic side. The beta stranded transmembrane segment at 157 to 164 (LTYGVMFE) threads the bilayer. The Chloroplast intermembrane portion of the chain corresponds to 165–271 (EIITRDENRR…VEEGSDKPQP (107 aa)). A beta stranded membrane pass occupies residues 272–280 (PVLVLHGRY). Residues 281–292 (GGCIGDLPSYDV) are Cytoplasmic-facing. Residues 293 to 301 (FALGGPNSV) traverse the membrane as a beta stranded segment. Over 302–363 (RGYSMGELGA…LYRKMGHGSS (62 aa)) the chain is Chloroplast intermembrane. Residues 364 to 370 (YGLGVKL) traverse the membrane as a beta stranded segment. Over 371 to 384 (GMVRAEYTVRHNRG) the chain is Cytoplasmic. A beta stranded transmembrane segment spans residues 385–392 (TGALFLRF). Over 393–396 (GERY) the chain is Chloroplast intermembrane.

This sequence belongs to the TOC75 family. Part of the TOC core complex that includes a protein for the specific recognition of transit peptides surrounded by a ring composed of four proteins forming translocation channels, and four to five GTP-binding proteins providing energy. This core complex can interact with components of the TIC complex to form a larger import complex. Chloroplastic protein precursors also interacts with these complexes. In terms of tissue distribution, expressed ubiquitously at low levels.

The protein localises to the plastid. The protein resides in the chloroplast outer membrane. Functionally, mediates the insertion of proteins targeted to the outer membrane of chloroplasts. Required for the import of protein precursors into chloroplasts. Forms the voltage-dependent preprotein translocation channels (hydrophilic beta barrel) of the TOC complex in the chloroplastic outer membrane. Required for etioplast formation and/or etioplast-chloroplast transition during deetiolation. The polypeptide is Protein TOC75-4, chloroplastic (TOC75-4) (Arabidopsis thaliana (Mouse-ear cress)).